A 306-amino-acid chain; its full sequence is N-acetylmuramic acid 6-phosphate etherase (306 aa).

One can recognise an SIS domain in the interval 55–218 (AAATLLAGGR…STGAMIKIGK (164 aa)). The active-site Proton donor is the Glu-83. Glu-114 is an active-site residue.

Belongs to the GCKR-like family. MurNAc-6-P etherase subfamily. As to quaternary structure, homodimer.

The enzyme catalyses N-acetyl-D-muramate 6-phosphate + H2O = N-acetyl-D-glucosamine 6-phosphate + (R)-lactate. It functions in the pathway amino-sugar metabolism; 1,6-anhydro-N-acetylmuramate degradation. The protein operates within amino-sugar metabolism; N-acetylmuramate degradation. It participates in cell wall biogenesis; peptidoglycan recycling. Its function is as follows. Specifically catalyzes the cleavage of the D-lactyl ether substituent of MurNAc 6-phosphate, producing GlcNAc 6-phosphate and D-lactate. Together with AnmK, is also required for the utilization of anhydro-N-acetylmuramic acid (anhMurNAc) either imported from the medium or derived from its own cell wall murein, and thus plays a role in cell wall recycling. This Erwinia tasmaniensis (strain DSM 17950 / CFBP 7177 / CIP 109463 / NCPPB 4357 / Et1/99) protein is N-acetylmuramic acid 6-phosphate etherase.